Consider the following 129-residue polypeptide: Glycine cleavage system H protein (129 aa).

The Lipoyl-binding domain occupies 24-106 (EAVVGITEHA…YGAGWLFRIK (83 aa)). Position 65 is an N6-lipoyllysine (K65).

This sequence belongs to the GcvH family. In terms of assembly, the glycine cleavage system is composed of four proteins: P, T, L and H. Requires (R)-lipoate as cofactor.

Its function is as follows. The glycine cleavage system catalyzes the degradation of glycine. The H protein shuttles the methylamine group of glycine from the P protein to the T protein. This Aeromonas salmonicida (strain A449) protein is Glycine cleavage system H protein.